Consider the following 1201-residue polypeptide: Vitamin B12-dependent ribonucleotide reductase (1201 aa).

Residues Ser153, 198–199, Gly230, 482–486, and 683–687 contribute to the substrate site; these read AC, NPCSE, and PTGTI. Cys199 and Cys495 are oxidised to a cystine. The active-site Proton acceptor is Asn482. Catalysis depends on Cys484, which acts as the Cysteine radical intermediate. The active-site Proton acceptor is the Glu486. The segment covering 1100-1118 has biased composition (basic and acidic residues); sequence DEIGSKRATAESNGQEKET. Positions 1100–1120 are disordered; it reads DEIGSKRATAESNGQEKETLS.

Belongs to the ribonucleoside diphosphate reductase class-2 family. Requires adenosylcob(III)alamin as cofactor.

The enzyme catalyses a 2'-deoxyribonucleoside 5'-diphosphate + [thioredoxin]-disulfide + H2O = a ribonucleoside 5'-diphosphate + [thioredoxin]-dithiol. Functionally, catalyzes the reduction of ribonucleotides to deoxyribonucleotides. May function to provide a pool of deoxyribonucleotide precursors for DNA repair during oxygen limitation and/or for immediate growth after restoration of oxygen. The chain is Vitamin B12-dependent ribonucleotide reductase (nrdJ) from Leptospira interrogans serogroup Icterohaemorrhagiae serovar copenhageni (strain Fiocruz L1-130).